The following is a 270-amino-acid chain: 25S rRNA adenine-N(1) methyltransferase (270 aa).

Positions 111 and 131 each coordinate S-adenosyl-L-methionine.

The protein belongs to the BMT2 family.

It localises to the nucleus. The protein localises to the nucleolus. Functionally, S-adenosyl-L-methionine-dependent methyltransferase that specifically methylates the N(1) position of an adenine present in helix 65 in 25S rRNA. The sequence is that of 25S rRNA adenine-N(1) methyltransferase from Schizosaccharomyces pombe (strain 972 / ATCC 24843) (Fission yeast).